We begin with the raw amino-acid sequence, 605 residues long: Zinc metalloproteinase nas-34 (605 aa).

The N-terminal stretch at 1 to 19 (MVSYWPVLIVLCLLPICHA) is a signal peptide. Positions 20–124 (KSYFADFVNG…EFLYAIRGKR (105 aa)) are excised as a propeptide. The region spanning 124–322 (RSMTSFLSER…VKRINFAYCN (199 aa)) is the Peptidase M12A domain. Disulfide bonds link cysteine 165–cysteine 321 and cysteine 191–cysteine 211. Histidine 219 is a Zn(2+) binding site. Residue glutamate 220 is part of the active site. Zn(2+) contacts are provided by histidine 223 and histidine 229. The EGF-like domain maps to 317–357 (NFAYCNSTCSNYLDCQNGGYINPNDCNNCKCPPGFGGQLCD). Asparagine 322 carries N-linked (GlcNAc...) asparagine glycosylation. 4 disulfide bridges follow: cysteine 325–cysteine 345, cysteine 347–cysteine 356, cysteine 366–cysteine 388, and cysteine 415–cysteine 436. The region spanning 366-469 (CGAGDITATS…ARFSLNYRYD (104 aa)) is the CUB domain. The disordered stretch occupies residues 479–526 (TTTSTTTTTAPITVPTVSPTTTTTRQTTTTARTSTTTTTTQAPPTTTT). Residues 525 to 566 (TTSTSQCASWSACSAQCGGCGTQSRRCGTYVETVYCNTNPCT) form the TSP type-1 domain. 3 disulfide bridges follow: cysteine 531–cysteine 551, cysteine 537–cysteine 560, and cysteine 541–cysteine 565.

The cofactor is Zn(2+). In terms of tissue distribution, expressed in hypodermal cells. First expressed in the dorsal and lateral surface area of the middle and posterior region of embryos. At later stages, it localizes to lateral surface regions, probably corresponding to hypodermal seam cells. In L1 larvae, it is expressed in seam cells and in a few cells anterior to the nerve ring.

It is found in the secreted. Its function is as follows. Metalloprotease. Required for normal hatching and migration of neuroblasts. May act by degrading eggshell proteins at hatching. This is Zinc metalloproteinase nas-34 (hch-1) from Caenorhabditis elegans.